A 546-amino-acid polypeptide reads, in one-letter code: Probable protein kinase UbiB (546 aa).

A Protein kinase domain is found at 123–501; the sequence is DFDETPLASA…SRRQGQARYL (379 aa). ATP-binding positions include 129 to 137 and Lys-152; that span reads LASASIAQV. Asp-287 acts as the Proton acceptor in catalysis. The next 2 helical transmembrane spans lie at 496-516 and 521-541; these read GQAR…VFLL and HIEW…LGWF.

Belongs to the ABC1 family. UbiB subfamily.

It localises to the cell inner membrane. It functions in the pathway cofactor biosynthesis; ubiquinone biosynthesis [regulation]. Is probably a protein kinase regulator of UbiI activity which is involved in aerobic coenzyme Q (ubiquinone) biosynthesis. The protein is Probable protein kinase UbiB of Aeromonas salmonicida (strain A449).